Reading from the N-terminus, the 176-residue chain is SsrA-binding protein (176 aa).

A disordered region spans residues 1–33; sequence MTEAGAKKAAGKKSGKGKGKNAKKNQPNITPVA. Residues 9 to 23 show a composition bias toward basic residues; sequence AAGKKSGKGKGKNAK.

It belongs to the SmpB family.

Its subcellular location is the cytoplasm. Its function is as follows. Required for rescue of stalled ribosomes mediated by trans-translation. Binds to transfer-messenger RNA (tmRNA), required for stable association of tmRNA with ribosomes. tmRNA and SmpB together mimic tRNA shape, replacing the anticodon stem-loop with SmpB. tmRNA is encoded by the ssrA gene; the 2 termini fold to resemble tRNA(Ala) and it encodes a 'tag peptide', a short internal open reading frame. During trans-translation Ala-aminoacylated tmRNA acts like a tRNA, entering the A-site of stalled ribosomes, displacing the stalled mRNA. The ribosome then switches to translate the ORF on the tmRNA; the nascent peptide is terminated with the 'tag peptide' encoded by the tmRNA and targeted for degradation. The ribosome is freed to recommence translation, which seems to be the essential function of trans-translation. The polypeptide is SsrA-binding protein (Rhodopirellula baltica (strain DSM 10527 / NCIMB 13988 / SH1)).